Here is a 179-residue protein sequence, read N- to C-terminus: Gamma-crystallin S (179 aa).

Ser2 carries the post-translational modification N-acetylserine. Residues 2–5 are N-terminal arm; the sequence is SKTG. Beta/gamma crystallin 'Greek key' domains lie at 6-44 and 45-87; these read TKIT…RVEG and GTWA…RALH. Residues 88–93 form a connecting peptide region; the sequence is LSSGGQ. 2 consecutive Beta/gamma crystallin 'Greek key' domains span residues 94 to 134 and 135 to 177; these read YKIQ…KVLD and GAWI…RRIV.

It belongs to the beta/gamma-crystallin family. In terms of assembly, monomer.

Crystallins are the dominant structural components of the vertebrate eye lens. The polypeptide is Gamma-crystallin S (CRYGS) (Oryctolagus cuniculus (Rabbit)).